Reading from the N-terminus, the 351-residue chain is Alanine racemase (351 aa).

Lys-35 serves as the catalytic Proton acceptor; specific for D-alanine. Lys-35 carries the N6-(pyridoxal phosphate)lysine modification. A substrate-binding site is contributed by Arg-127. The active-site Proton acceptor; specific for L-alanine is Tyr-247. Met-295 serves as a coordination point for substrate.

This sequence belongs to the alanine racemase family. Pyridoxal 5'-phosphate is required as a cofactor.

It carries out the reaction L-alanine = D-alanine. It participates in amino-acid biosynthesis; D-alanine biosynthesis; D-alanine from L-alanine: step 1/1. In terms of biological role, catalyzes the interconversion of L-alanine and D-alanine. May also act on other amino acids. This is Alanine racemase (alr) from Vesicomyosocius okutanii subsp. Calyptogena okutanii (strain HA).